Reading from the N-terminus, the 389-residue chain is Cytochrome b (389 aa).

8 helical membrane-spanning segments follow: residues 32 to 52 (FGFF…LLAM), 76 to 98 (WLLR…IHML), 113 to 133 (LWVS…LGYV), 179 to 199 (FFSL…LHII), 225 to 245 (FTIK…TFVF), 290 to 310 (LGVL…FLTI), 325 to 345 (LFWS…QPAA), and 353 to 373 (LYST…IYIV). 2 residues coordinate heme b: His-82 and His-96. Residues His-183 and His-197 each contribute to the heme b site.

This sequence belongs to the cytochrome b family. As to quaternary structure, the main subunits of complex b-c1 are: cytochrome b, cytochrome c1 and the Rieske protein. Heme b is required as a cofactor.

It is found in the mitochondrion inner membrane. In terms of biological role, component of the ubiquinol-cytochrome c reductase complex (complex III or cytochrome b-c1 complex) that is part of the mitochondrial respiratory chain. The b-c1 complex mediates electron transfer from ubiquinol to cytochrome c. Contributes to the generation of a proton gradient across the mitochondrial membrane that is then used for ATP synthesis. The chain is Cytochrome b (cytB) from Dictyostelium discoideum (Social amoeba).